The following is a 229-amino-acid chain: 4-hydroxy-tetrahydrodipicolinate reductase (229 aa).

Residues 10–15 (GSAGRM), 78–80 (GTT), and 102–105 (SSNM) contribute to the NAD(+) site. Histidine 133 serves as the catalytic Proton donor/acceptor. Histidine 134 is a (S)-2,3,4,5-tetrahydrodipicolinate binding site. Lysine 137 serves as the catalytic Proton donor. Residue 143-144 (GT) participates in (S)-2,3,4,5-tetrahydrodipicolinate binding.

Belongs to the DapB family.

It is found in the cytoplasm. It carries out the reaction (S)-2,3,4,5-tetrahydrodipicolinate + NAD(+) + H2O = (2S,4S)-4-hydroxy-2,3,4,5-tetrahydrodipicolinate + NADH + H(+). The catalysed reaction is (S)-2,3,4,5-tetrahydrodipicolinate + NADP(+) + H2O = (2S,4S)-4-hydroxy-2,3,4,5-tetrahydrodipicolinate + NADPH + H(+). The protein operates within amino-acid biosynthesis; L-lysine biosynthesis via DAP pathway; (S)-tetrahydrodipicolinate from L-aspartate: step 4/4. Functionally, catalyzes the conversion of 4-hydroxy-tetrahydrodipicolinate (HTPA) to tetrahydrodipicolinate. The polypeptide is 4-hydroxy-tetrahydrodipicolinate reductase (Bdellovibrio bacteriovorus (strain ATCC 15356 / DSM 50701 / NCIMB 9529 / HD100)).